Reading from the N-terminus, the 358-residue chain is Magnesium-protoporphyrin IX monomethyl ester [oxidative] cyclase (358 aa).

This sequence belongs to the AcsF family. Requires Fe cation as cofactor.

The catalysed reaction is Mg-protoporphyrin IX 13-monomethyl ester + 3 NADPH + 3 O2 + 2 H(+) = 3,8-divinyl protochlorophyllide a + 3 NADP(+) + 5 H2O. The protein operates within porphyrin-containing compound metabolism; chlorophyll biosynthesis (light-independent). Its function is as follows. Catalyzes the formation of the isocyclic ring in chlorophyll biosynthesis. Mediates the cyclase reaction, which results in the formation of divinylprotochlorophyllide (Pchlide) characteristic of all chlorophylls from magnesium-protoporphyrin IX 13-monomethyl ester (MgPMME). The sequence is that of Magnesium-protoporphyrin IX monomethyl ester [oxidative] cyclase from Synechococcus elongatus (strain ATCC 33912 / PCC 7942 / FACHB-805) (Anacystis nidulans R2).